The primary structure comprises 154 residues: Cyclin-dependent protein kinase inhibitor SMR11 (154 aa).

The disordered stretch occupies residues 1–44; it reads MEQEEPCEAKETASSSIEPKTPNPNVPDSIPAIDSDSSLSEEEI. Over residues 27-38 the composition is skewed to low complexity; sequence PDSIPAIDSDSS.

Interacts with CYCB2-4.

Probable cyclin-dependent protein kinase (CDK) inhibitor that functions as a repressor of mitosis in the endoreduplication cell cycle. The sequence is that of Cyclin-dependent protein kinase inhibitor SMR11 from Arabidopsis thaliana (Mouse-ear cress).